The following is a 503-amino-acid chain: Probable mitochondrial-processing peptidase subunit alpha-1, mitochondrial (503 aa).

The transit peptide at 1 to 59 (MYRTAASRARALKGVLTRSLRPARYASSSAVAETSSSTPAYLSWLSGGSRAALTSLDMP) directs the protein to the mitochondrion.

It belongs to the peptidase M16 family. Heterodimer of alpha and beta subunits, forming the mitochondrial processing protease (MPP) in which subunit alpha is involved in substrate recognition and binding and subunit beta is the catalytic subunit. Component of the ubiquinol-cytochrome c oxidoreductase (cytochrome b-c1 complex, complex III, CIII), a multisubunit enzyme composed of 10 subunits. The complex is composed of 3 respiratory subunits cytochrome b (MT-CYB), cytochrome c1 (CYC1-1 or CYC1-2) and Rieske protein (UCR1-1 or UCR1-2), 2 core protein subunits MPPalpha1 (or MPPalpha2) and MPPB, and 5 low-molecular weight protein subunits QCR7-1 (or QCR7-2), UCRQ-1 (or UCRQ-2), QCR9, UCRY and probably QCR6-1 (or QCR6-2). The complex exists as an obligatory dimer and forms supercomplexes (SCs) in the inner mitochondrial membrane with NADH-ubiquinone oxidoreductase (complex I, CI), resulting in different assemblies (supercomplexes SCI(1)III(2) and SCI(2)III(4)).

Its subcellular location is the mitochondrion matrix. The protein localises to the mitochondrion inner membrane. Its function is as follows. Substrate recognition and binding subunit of the essential mitochondrial processing protease (MPP), which cleaves the mitochondrial sequence off newly imported precursors proteins. Component of the ubiquinol-cytochrome c oxidoreductase, a multisubunit transmembrane complex that is part of the mitochondrial electron transport chain which drives oxidative phosphorylation. The respiratory chain contains 3 multisubunit complexes succinate dehydrogenase (complex II, CII), ubiquinol-cytochrome c oxidoreductase (cytochrome b-c1 complex, complex III, CIII) and cytochrome c oxidase (complex IV, CIV), that cooperate to transfer electrons derived from NADH and succinate to molecular oxygen, creating an electrochemical gradient over the inner membrane that drives transmembrane transport and the ATP synthase. The cytochrome b-c1 complex catalyzes electron transfer from ubiquinol to cytochrome c, linking this redox reaction to translocation of protons across the mitochondrial inner membrane, with protons being carried across the membrane as hydrogens on the quinol. In the process called Q cycle, 2 protons are consumed from the matrix, 4 protons are released into the intermembrane space and 2 electrons are passed to cytochrome c. This chain is Probable mitochondrial-processing peptidase subunit alpha-1, mitochondrial (MPPalpha1), found in Arabidopsis thaliana (Mouse-ear cress).